A 285-amino-acid polypeptide reads, in one-letter code: Glycine--tRNA ligase alpha subunit (285 aa).

It belongs to the class-II aminoacyl-tRNA synthetase family. Tetramer of two alpha and two beta subunits.

The protein localises to the cytoplasm. The enzyme catalyses tRNA(Gly) + glycine + ATP = glycyl-tRNA(Gly) + AMP + diphosphate. The chain is Glycine--tRNA ligase alpha subunit from Thermodesulfovibrio yellowstonii (strain ATCC 51303 / DSM 11347 / YP87).